A 687-amino-acid chain; its full sequence is Glycine--tRNA ligase beta subunit (687 aa).

The protein belongs to the class-II aminoacyl-tRNA synthetase family. Tetramer of two alpha and two beta subunits.

Its subcellular location is the cytoplasm. It carries out the reaction tRNA(Gly) + glycine + ATP = glycyl-tRNA(Gly) + AMP + diphosphate. The protein is Glycine--tRNA ligase beta subunit of Neisseria meningitidis serogroup B (strain ATCC BAA-335 / MC58).